We begin with the raw amino-acid sequence, 759 residues long: Phosphoribosylformylglycinamidine synthase subunit PurL (759 aa).

H46 is an active-site residue. 2 residues coordinate ATP: Y49 and K88. E90 lines the Mg(2+) pocket. Substrate is bound by residues 91–94 (SHNH) and R113. The active-site Proton acceptor is H92. A Mg(2+)-binding site is contributed by D114. Q237 lines the substrate pocket. D265 is a binding site for Mg(2+). Residue 309 to 311 (ESQ) participates in substrate binding. ATP contacts are provided by D498 and G535. N536 serves as a coordination point for Mg(2+). S538 provides a ligand contact to substrate.

It belongs to the FGAMS family. As to quaternary structure, monomer. Part of the FGAM synthase complex composed of 1 PurL, 1 PurQ and 2 PurS subunits.

It localises to the cytoplasm. It carries out the reaction N(2)-formyl-N(1)-(5-phospho-beta-D-ribosyl)glycinamide + L-glutamine + ATP + H2O = 2-formamido-N(1)-(5-O-phospho-beta-D-ribosyl)acetamidine + L-glutamate + ADP + phosphate + H(+). Its pathway is purine metabolism; IMP biosynthesis via de novo pathway; 5-amino-1-(5-phospho-D-ribosyl)imidazole from N(2)-formyl-N(1)-(5-phospho-D-ribosyl)glycinamide: step 1/2. Part of the phosphoribosylformylglycinamidine synthase complex involved in the purines biosynthetic pathway. Catalyzes the ATP-dependent conversion of formylglycinamide ribonucleotide (FGAR) and glutamine to yield formylglycinamidine ribonucleotide (FGAM) and glutamate. The FGAM synthase complex is composed of three subunits. PurQ produces an ammonia molecule by converting glutamine to glutamate. PurL transfers the ammonia molecule to FGAR to form FGAM in an ATP-dependent manner. PurS interacts with PurQ and PurL and is thought to assist in the transfer of the ammonia molecule from PurQ to PurL. This chain is Phosphoribosylformylglycinamidine synthase subunit PurL, found in Anaeromyxobacter sp. (strain K).